Here is a 407-residue protein sequence, read N- to C-terminus: Zinc finger protein 260 (407 aa).

Disordered regions lie at residues 1–21 (MLESLQPESHLLHDEPDPGES), 39–72 (VEHKKTHSGEKSPECTGCGEESSQASSLTLHLRS), and 96–124 (SHQKQHTEERPSESKKTPVPMTTTVRNQR). A C2H2-type 1 zinc finger spans residues 23-45 (YECNECKETFSLEQNFVEHKKTH). Basic and acidic residues-rich tracts occupy residues 39–51 (VEHKKTHSGEKSP) and 100–111 (QHTEERPSESKK). The C2H2-type 2; degenerate zinc-finger motif lies at 51–73 (PECTGCGEESSQASSLTLHLRSR). A C2H2-type 3 zinc finger spans residues 79 to 101 (YKCGECGKAFSQRGNFLSHQKQH). Over residues 115–124 (PMTTTVRNQR) the composition is skewed to polar residues. C2H2-type zinc fingers lie at residues 131 to 153 (YACKECGKAFNGKSYLKEHEKIH), 159 to 181 (FECSQCGRAFSQKQYLIKHQNIH), 187 to 209 (FKCNECGKAFSQKENLIIHQRIH), 215 to 237 (YECKGCGKAFIQKSSLIRHQRSH), 243 to 265 (YTCKECGKAFSGKSNLTEHEKIH), 271 to 293 (YKCNECGTIFRQKQYLIKHHNIH), 299 to 321 (YECNKCGKAFSRITSLIVHVRIH), 327 to 349 (YECKICGKAFCQSSSLTVHMRSH), 355 to 377 (YGCNECGKAFSQFSTLALHMRIH), and 383 to 405 (YQCSECGKAFSQKSHHIRHQRIH).

This sequence belongs to the krueppel C2H2-type zinc-finger protein family. In terms of assembly, binds DNA. Interacts with GATA4. In terms of tissue distribution, predominantly present in heart. Outside the heart, it is detected in embryonic and postnatal vascular smooth muscle cells and in epithelial cells of the lung, gut and kidney at sites of epithelial morphogenesis and in the spinal cord (at protein level).

The protein localises to the nucleus. Its function is as follows. Transcription factor that acts as a cardiac regulator and an effector of alpha1-adrenergic signaling. Binds to PE response elements (PERE) present in the promoter of genes such as ANF/NPPA and acts as a direct transcriptional activator of NPPA. Also acts as a cofactor with GATA4, a key cardiac regulator. The polypeptide is Zinc finger protein 260 (Znf260) (Mus musculus (Mouse)).